The sequence spans 195 residues: Protein GrpE (195 aa).

The interval M1–K60 is disordered. Residues G37–K60 are compositionally biased toward basic and acidic residues.

It belongs to the GrpE family. Homodimer.

The protein localises to the cytoplasm. Participates actively in the response to hyperosmotic and heat shock by preventing the aggregation of stress-denatured proteins, in association with DnaK and GrpE. It is the nucleotide exchange factor for DnaK and may function as a thermosensor. Unfolded proteins bind initially to DnaJ; upon interaction with the DnaJ-bound protein, DnaK hydrolyzes its bound ATP, resulting in the formation of a stable complex. GrpE releases ADP from DnaK; ATP binding to DnaK triggers the release of the substrate protein, thus completing the reaction cycle. Several rounds of ATP-dependent interactions between DnaJ, DnaK and GrpE are required for fully efficient folding. This chain is Protein GrpE, found in Limosilactobacillus fermentum (strain NBRC 3956 / LMG 18251) (Lactobacillus fermentum).